The sequence spans 129 residues: uncharacterized protein (129 aa).

The chain crosses the membrane as a helical span at residues 77-97 (ILAVFIISFIIVVVGVLLLGL). The interval 109–129 (SSNDKKLQSNDEEKQALAEKA) is disordered. Residues 111 to 129 (NDKKLQSNDEEKQALAEKA) show a composition bias toward basic and acidic residues.

It localises to the vacuole membrane. This is an uncharacterized protein from Saccharomyces cerevisiae (strain ATCC 204508 / S288c) (Baker's yeast).